Reading from the N-terminus, the 108-residue chain is Competence protein ComGC (108 aa).

Residues 1-13 (MKKMMTFLKKAKV) form the signal peptide. The segment at 14-39 (KAFTLVEMLVVLLIISVLFLLFVPNL) is may be involved in polymerization of ComGC. Position 16 is an N-methylphenylalanine (Phe-16). The helical transmembrane segment at 16–36 (FTLVEMLVVLLIISVLFLLFV) threads the bilayer.

It belongs to the ComGC family. As to quaternary structure, the transformation pili are flexible filaments, consisting mainly of the major pilin ComGC and smaller amounts of the minor pilins, including at least ComGD, ComGF and ComGG, and perhaps ComGE. Homodimer. Forms higher-order multimers. Interacts with ComGG; the interaction is probably direct. In terms of processing, undergoes proteolytic cleavage.

The protein localises to the cell membrane. Its subcellular location is the cell surface. It is found in the fimbrium. The protein resides in the secreted. In terms of biological role, major component of the type IV-like pilus (T4P) that plays a role in transformation. Transformation pili are dynamically extended and retracted, perhaps thereby promoting DNA uptake and transformation. Required for transformation. Required for DNA binding. The polypeptide is Competence protein ComGC (Streptococcus pneumoniae serotype 4 (strain ATCC BAA-334 / TIGR4)).